The sequence spans 210 residues: Inner membrane-spanning protein YciB (210 aa).

Transmembrane regions (helical) follow at residues 12–32 (EVSPLLKLVLELGPLMVFFFA), 53–73 (IFIATGLFMAATAAALAVSWM), 78–98 (LPMMPLISGIVVFVFGALTLW), 115–135 (LFGAILLGGLLFGKSLLGYVF), 153–173 (WGVFFLFLAVLNEVIWRSFST), and 175–195 (FWVAFKVWGTMPITILFTLAQ).

Belongs to the YciB family.

Its subcellular location is the cell inner membrane. In terms of biological role, plays a role in cell envelope biogenesis, maintenance of cell envelope integrity and membrane homeostasis. The polypeptide is Inner membrane-spanning protein YciB (Sinorhizobium medicae (strain WSM419) (Ensifer medicae)).